The following is a 30-amino-acid chain: Ranatuerin-2OK (30 aa).

Cysteine 23 and cysteine 30 are disulfide-bonded.

Expressed by the skin glands.

It localises to the secreted. Its function is as follows. Antimicrobial peptide. Active against Gram-negative bacterium E.coli (MIC=12.5 uM) and against Gram-positive bacterium S.aureus (MIC=50 uM). The sequence is that of Ranatuerin-2OK from Nidirana okinavana (Kampira Falls frog).